Here is a 526-residue protein sequence, read N- to C-terminus: 1,4-beta-D-glucan cellobiohydrolase B (526 aa).

The N-terminal stretch at 1–23 (MASSFQLYKALLFFSSLLSAVQA) is a signal peptide. Residues 24-458 (QKVGTQQAEV…SNIKFGPIGS (435 aa)) form a catalytic region. The active-site Nucleophile is E235. The active-site Proton donor is the E240. N293 and N400 each carry an N-linked (GlcNAc...) asparagine glycan. The ser/Thr-rich linker stretch occupies residues 459 to 490 (TFGNGGGSGPTTTVTTSTATSTTSSATSTATG). Positions 464 to 488 (GGSGPTTTVTTSTATSTTSSATSTA) are disordered. Residues 468–488 (PTTTVTTSTATSTTSSATSTA) are compositionally biased toward low complexity. Residues 490–526 (GQAQHWEQCGGNGWTGPTVCASPWACTVVNSWYSQCL) enclose the CBM1 domain. 2 cysteine pairs are disulfide-bonded: C498-C515 and C509-C525.

It belongs to the glycosyl hydrolase 7 (cellulase C) family.

It localises to the secreted. The catalysed reaction is Hydrolysis of (1-&gt;4)-beta-D-glucosidic linkages in cellulose and cellotetraose, releasing cellobiose from the non-reducing ends of the chains.. In terms of biological role, the biological conversion of cellulose to glucose generally requires three types of hydrolytic enzymes: (1) Endoglucanases which cut internal beta-1,4-glucosidic bonds; (2) Exocellobiohydrolases that cut the disaccharide cellobiose from the non-reducing end of the cellulose polymer chain; (3) Beta-1,4-glucosidases which hydrolyze the cellobiose and other short cello-oligosaccharides to glucose. The polypeptide is 1,4-beta-D-glucan cellobiohydrolase B (cbhB) (Emericella nidulans (strain FGSC A4 / ATCC 38163 / CBS 112.46 / NRRL 194 / M139) (Aspergillus nidulans)).